Reading from the N-terminus, the 367-residue chain is (E)-2-epi-beta-caryophyllene synthase (367 aa).

Mg(2+) contacts are provided by D93, N234, and S238. A DDXXE motif motif is present at residues 93-97; that stretch reads DDIAE.

This sequence belongs to the terpene synthase family. Mg(2+) serves as cofactor. It depends on Mn(2+) as a cofactor.

It catalyses the reaction (2E,6E)-farnesyl diphosphate = (E)-2-epi-beta-caryophyllene + diphosphate. Its pathway is secondary metabolite biosynthesis; terpenoid biosynthesis. In terms of biological role, sesquiterpene synthase converting farnesyl diphosphate to (E)-2-epi-beta-caryophyllene as the major product, and to two other unidentified sesquiterpenes. Has no diterpene synthase activity. The polypeptide is (E)-2-epi-beta-caryophyllene synthase (Selaginella moellendorffii (Spikemoss)).